A 59-amino-acid chain; its full sequence is Large ribosomal subunit protein uL30 (59 aa).

It belongs to the universal ribosomal protein uL30 family. Part of the 50S ribosomal subunit.

The chain is Large ribosomal subunit protein uL30 from Enterococcus faecalis (strain ATCC 700802 / V583).